The following is a 144-amino-acid chain: Testis-specific protein TSX (144 aa).

Disordered regions lie at residues 1 to 21 (MSEK…DLPE), 69 to 99 (EDRV…RDID), and 120 to 144 (FTDQ…NPTD). Residues 75-90 (TDDEDTCQAGCTEDDE) show a composition bias toward acidic residues.

Testis.

In terms of biological role, may have an RNA/DNA binding role. This Mus musculus (Mouse) protein is Testis-specific protein TSX (Tsx).